An 850-amino-acid polypeptide reads, in one-letter code: PH domain-containing protein YHR131C (850 aa).

Residues 194 to 306 (RIHSDLVHRS…MYLSIGISVS (113 aa)) enclose the PH domain. Positions 324-338 (RRRRRRRRRRRRHTH) are enriched in basic residues. 5 disordered regions span residues 324 to 348 (RRRR…GSFS), 406 to 428 (SAAS…SGCS), 451 to 494 (SSRT…GVPV), 583 to 659 (EASI…TDDS), and 793 to 850 (TTKD…QITA). The segment covering 406–416 (SAASGESSDNS) has biased composition (low complexity). The span at 417–428 (TLGSTRSLSGCS) shows a compositional bias: polar residues. Residues 479-489 (HHESSGGDHPE) show a composition bias toward basic and acidic residues. Positions 605 to 619 (ESATDLSQSSRSLCL) are enriched in polar residues. Acidic residues-rich tracts occupy residues 626 to 658 (INDD…DTDD) and 799 to 850 (DHGE…QITA).

It localises to the cytoplasm. The chain is PH domain-containing protein YHR131C from Saccharomyces cerevisiae (strain ATCC 204508 / S288c) (Baker's yeast).